A 135-amino-acid polypeptide reads, in one-letter code: Protein E6 (135 aa).

2 zinc fingers span residues C11–C47 and C83–C119.

The protein belongs to the papillomaviridae E6 protein family. As to quaternary structure, forms homodimers. Interacts with ubiquitin-protein ligase UBE3A/E6-AP; this interaction stimulates UBE3A ubiquitin activity. Interacts with host BAK1.

It is found in the host cytoplasm. The protein localises to the host nucleus. Functionally, plays a major role in the induction and maintenance of cellular transformation. E6 associates with host UBE3A/E6-AP ubiquitin-protein ligase and modulates its activity. Protects host keratinocytes from apoptosis by mediating the degradation of host BAK1. May also inhibit host immune response. The polypeptide is Protein E6 (Cervus elaphus (Red deer)).